Reading from the N-terminus, the 416-residue chain is Adenylosuccinate synthetase (416 aa).

GTP-binding positions include 13–19 and 41–43; these read GDEGKGK and GHT. The active-site Proton acceptor is the aspartate 14. The Mg(2+) site is built by aspartate 14 and glycine 41. IMP-binding positions include 14–17, 39–42, threonine 126, arginine 140, glutamine 220, threonine 235, and arginine 299; these read DEGK and NAGH. Histidine 42 (proton donor) is an active-site residue. Substrate is bound at residue 295-301; the sequence is TTTGRPR. GTP is bound by residues arginine 301, 327–329, and 405–407; these read KLD and STS.

It belongs to the adenylosuccinate synthetase family. In terms of assembly, homodimer. The cofactor is Mg(2+).

The protein resides in the cytoplasm. The enzyme catalyses IMP + L-aspartate + GTP = N(6)-(1,2-dicarboxyethyl)-AMP + GDP + phosphate + 2 H(+). It participates in purine metabolism; AMP biosynthesis via de novo pathway; AMP from IMP: step 1/2. Its function is as follows. Plays an important role in the de novo pathway of purine nucleotide biosynthesis. Catalyzes the first committed step in the biosynthesis of AMP from IMP. This is Adenylosuccinate synthetase from Sulfurovum sp. (strain NBC37-1).